The primary structure comprises 326 residues: Protein-arginine N-acetylglucosaminyltransferase NleB2 (326 aa).

UDP-N-acetyl-alpha-D-glucosamine-binding positions include 45–47 (QWF), tyrosine 69, and 216–219 (YLDM). The DXD motif signature appears at 218 to 220 (DMD). Mn(2+) is bound at residue aspartate 220. Glutamate 250 (proton acceptor) is an active-site residue. Asparagine 317 and serine 319 together coordinate Mn(2+). UDP-N-acetyl-alpha-D-glucosamine contacts are provided by residues serine 319 and 324–326 (SSW).

This sequence belongs to the glycosyltransferase NleB family. Mn(2+) serves as cofactor.

It is found in the secreted. The protein localises to the host cell. It catalyses the reaction L-arginyl-[protein] + UDP-N-acetyl-alpha-D-glucosamine = N(omega)-(N-acetyl-beta-D-glucosaminyl)-L-arginyl-[protein] + UDP + H(+). Its function is as follows. Protein-arginine N-acetylglucosaminyltransferase effector that catalyzes the transfer of a single N-acetylglucosamine (GlcNAc) to a conserved arginine residue of host target proteins. In contrast to NleB1, not able to disrupt TNF signaling in infected cells. Shows a lower enzymatic activity than NleB1. This chain is Protein-arginine N-acetylglucosaminyltransferase NleB2, found in Escherichia coli O127:H6 (strain E2348/69 / EPEC).